A 337-amino-acid chain; its full sequence is Adenosine deaminase (337 aa).

His-15 and His-17 together coordinate Zn(2+). Substrate is bound by residues His-17, Asp-19, and Gly-172. Residue His-199 coordinates Zn(2+). Residue Glu-202 is the Proton donor of the active site. Residue Asp-279 coordinates Zn(2+).

This sequence belongs to the metallo-dependent hydrolases superfamily. Adenosine and AMP deaminases family. Adenosine deaminase subfamily. It depends on Zn(2+) as a cofactor.

The catalysed reaction is adenosine + H2O + H(+) = inosine + NH4(+). It catalyses the reaction 2'-deoxyadenosine + H2O + H(+) = 2'-deoxyinosine + NH4(+). Its function is as follows. Catalyzes the hydrolytic deamination of adenosine and 2-deoxyadenosine. In Enterococcus faecalis (strain ATCC 700802 / V583), this protein is Adenosine deaminase.